Consider the following 126-residue polypeptide: Aspartate 1-decarboxylase (126 aa).

S25 acts as the Schiff-base intermediate with substrate; via pyruvic acid in catalysis. At S25 the chain carries Pyruvic acid (Ser). Residue T57 coordinates substrate. The Proton donor role is filled by Y58. 73–75 (GGA) provides a ligand contact to substrate.

Belongs to the PanD family. In terms of assembly, heterooctamer of four alpha and four beta subunits. Pyruvate is required as a cofactor. In terms of processing, is synthesized initially as an inactive proenzyme, which is activated by self-cleavage at a specific serine bond to produce a beta-subunit with a hydroxyl group at its C-terminus and an alpha-subunit with a pyruvoyl group at its N-terminus.

It localises to the cytoplasm. The catalysed reaction is L-aspartate + H(+) = beta-alanine + CO2. The protein operates within cofactor biosynthesis; (R)-pantothenate biosynthesis; beta-alanine from L-aspartate: step 1/1. Catalyzes the pyruvoyl-dependent decarboxylation of aspartate to produce beta-alanine. This chain is Aspartate 1-decarboxylase, found in Stenotrophomonas maltophilia (strain K279a).